The primary structure comprises 114 residues: T cell receptor beta variable 25-1 (114 aa).

A signal peptide spans 1-21 (MTIRLLCYVGFYFLGAGLMEA). Residues 22–114 (DIYQTPRYLV…TSQYLCASSE (93 aa)) form the Ig-like domain. Residues Cys42 and Cys110 are joined by a disulfide bond. An N-linked (GlcNAc...) asparagine glycan is attached at Asn72.

As to quaternary structure, alpha-beta TR is a heterodimer composed of an alpha and beta chain; disulfide-linked. The alpha-beta TR is associated with the transmembrane signaling CD3 coreceptor proteins to form the TR-CD3 (TcR or TCR). The assembly of alpha-beta TR heterodimers with CD3 occurs in the endoplasmic reticulum where a single alpha-beta TR heterodimer associates with one CD3D-CD3E heterodimer, one CD3G-CD3E heterodimer and one CD247 homodimer forming a stable octameric structure. CD3D-CD3E and CD3G-CD3E heterodimers preferentially associate with TR alpha and TR beta chains, respectively. The association of the CD247 homodimer is the last step of TcR assembly in the endoplasmic reticulum and is required for transport to the cell surface.

Its subcellular location is the cell membrane. Functionally, v region of the variable domain of T cell receptor (TR) beta chain that participates in the antigen recognition. Alpha-beta T cell receptors are antigen specific receptors which are essential to the immune response and are present on the cell surface of T lymphocytes. Recognize peptide-major histocompatibility (MH) (pMH) complexes that are displayed by antigen presenting cells (APC), a prerequisite for efficient T cell adaptive immunity against pathogens. Binding of alpha-beta TR to pMH complex initiates TR-CD3 clustering on the cell surface and intracellular activation of LCK that phosphorylates the ITAM motifs of CD3G, CD3D, CD3E and CD247 enabling the recruitment of ZAP70. In turn ZAP70 phosphorylates LAT, which recruits numerous signaling molecules to form the LAT signalosome. The LAT signalosome propagates signal branching to three major signaling pathways, the calcium, the mitogen-activated protein kinase (MAPK) kinase and the nuclear factor NF-kappa-B (NF-kB) pathways, leading to the mobilization of transcription factors that are critical for gene expression and essential for T cell growth and differentiation. The T cell repertoire is generated in the thymus, by V-(D)-J rearrangement. This repertoire is then shaped by intrathymic selection events to generate a peripheral T cell pool of self-MH restricted, non-autoaggressive T cells. Post-thymic interaction of alpha-beta TR with the pMH complexes shapes TR structural and functional avidity. The polypeptide is T cell receptor beta variable 25-1 (Homo sapiens (Human)).